Here is a 458-residue protein sequence, read N- to C-terminus: Protein RICE SALT SENSITIVE 3 (458 aa).

The segment covering Met1–Gly17 has biased composition (gly residues). Disordered stretches follow at residues Met1–Arg21, Thr220–Asp325, Gly354–Gly374, and Ser386–Glu458. Residues Thr220–Gln232 are compositionally biased toward low complexity. The span at His245–Pro262 shows a compositional bias: pro residues. The segment covering Gln308–His317 has biased composition (low complexity). The span at Ser413–Gln436 shows a compositional bias: low complexity.

As to quaternary structure, interacts with BHLH094, BHLH089, TIFY11A/JAZ9 and TIFY11C/JAZ11. Forms a ternary complex with TIFY11A/JAZ9 and BHLH094 in the nucleus. Expressed in root tips. Expressed at high levels in the meristematic zone and at low levels in the elongation zone of the root tip.

Its subcellular location is the nucleus. The protein localises to the cytoplasm. In terms of biological role, involved in the repression of jasmonate (JA)-induced genes. Forms a ternary complex with TIFY11A/JAZ9 and BHLH094 to negatively regulate JA-responsive genes. Involved in transcriptional regulation in the root tip. Plays a regulatory role in root cell elongation. Regulates root cell elongation during salt stress. This Oryza sativa subsp. japonica (Rice) protein is Protein RICE SALT SENSITIVE 3.